The chain runs to 86 residues: Protein P17 (86 aa).

The tract at residues 63-86 (SPAEKPDNQPELTGITFEGDNNDQ) is disordered.

As to quaternary structure, homotetramer.

Its function is as follows. Assembly protein that acts late in phage assembly, after capsid protein folding and multimerization, and sorting of membrane proteins has occurred. The major coat protein P3 and two assembly factors (P10 and P17) are needed during the assembly of the virus particle inside the host cell, when the capsid protein multimers are capable of enclosing the host-derived membrane, containing the virus-encoded membrane-associated proteins. The sequence is that of Protein P17 (XVII) from Enterobacteria phage PRD1 (Bacteriophage PRD1).